A 208-amino-acid chain; its full sequence is Thymidylate kinase (208 aa).

An ATP-binding site is contributed by 9–16 (GGEGCGKS).

It belongs to the thymidylate kinase family.

It catalyses the reaction dTMP + ATP = dTDP + ADP. Its function is as follows. Phosphorylation of dTMP to form dTDP in both de novo and salvage pathways of dTTP synthesis. This is Thymidylate kinase from Dehalococcoides mccartyi (strain CBDB1).